Reading from the N-terminus, the 921-residue chain is MEYKNTLLMPKTEFPMRGNLPKREPAMQEKWAEMNIYEKVQEHTKGRPLFVLHDGPPYANGDIHMGHALNKVLKDFIVRFKSMTGYCAPYVPGWDTHGLPIEQALTNKGVKRKEMTVAEFRKLCAEYAYEQVERQREQFKRLGVRADWDNPYITLEPAYEAQQIKVFGDMAKKGYIYKGQKPVYWSPTSESALAEAEIEYQDKKSASIYVAFPVKDGKNVLEGDEKYIIWTTTPWTLPANLGISVHPELEYAIVKVNDEKYIIASELFETVAKTLEWENAEVVKTVKGSELEYTVAKHPFYDRDSLVMLGEHVTTDAGTGCVHTAPGHGEDDFVVGKKYGLEVLCPVDDKGVLTNEAPGFEGLFYDKANKPITEKLEEVGALLKLTFITHSYPHDWRTKKPIIFRATAQWFASIEAFRKELLEAVAETKWVPAWGETRLHNMVRDRGDWCISRQRAWGVPIPVFYAENGDPIITDETINHVADLFREHGSNVWFEREAKDLLPEGFTHTGSPNGEFRKETDIMDVWFDSGSSHQAVLEEREDLQRPADLYLEGSDQYRGWFNSSLSTAVAVTGKAPYKGVLSHGFVLDGEGRKMSKSIGNIVVPKKIMDQLGGDILRLWVSSVDYQSDVRISDDILKQVAEVYRKIRNTFRFLLGNLDDFNPSENTVAVAELREVDRYMLVKLNDLITKVKDAYETYDFAAVYHAIHNFCTIDLSSFYLDFAKDILYIEGADHADRRAIQTVLYDVLVALTKLVTPILPHTADEVWPYVPGAEEESVQLTNMPEATEVEGSEALRAKWDAFMTLRDDVLKALEVARNEKVIGKSLNASITLYPTAEMKAMLESISEDLKQLFIVSEYKLGGTIEEAPTEAPKYEHTAVVVAQATGETCERCWVVSETIGKDAEHETLCERCATVVKENYVK.

A 'HIGH' region motif is present at residues 57-67 (PYANGDIHMGH). Glu552 contacts L-isoleucyl-5'-AMP. Residues 593–597 (KMSKS) carry the 'KMSKS' region motif. ATP is bound at residue Lys596. Residues Cys888, Cys891, Cys908, and Cys911 each coordinate Zn(2+).

It belongs to the class-I aminoacyl-tRNA synthetase family. IleS type 1 subfamily. As to quaternary structure, monomer. Zn(2+) is required as a cofactor.

It localises to the cytoplasm. It carries out the reaction tRNA(Ile) + L-isoleucine + ATP = L-isoleucyl-tRNA(Ile) + AMP + diphosphate. Catalyzes the attachment of isoleucine to tRNA(Ile). As IleRS can inadvertently accommodate and process structurally similar amino acids such as valine, to avoid such errors it has two additional distinct tRNA(Ile)-dependent editing activities. One activity is designated as 'pretransfer' editing and involves the hydrolysis of activated Val-AMP. The other activity is designated 'posttransfer' editing and involves deacylation of mischarged Val-tRNA(Ile). The polypeptide is Isoleucine--tRNA ligase (Bacillus mycoides (strain KBAB4) (Bacillus weihenstephanensis)).